The following is a 543-amino-acid chain: Sensor histidine kinase DcuS (543 aa).

Topologically, residues methionine 1–threonine 20 are cytoplasmic. Residues valine 21–phenylalanine 41 form a helical membrane-spanning segment. Residues serine 42 to tryptophan 181 are Periplasmic-facing. (R)-malate contacts are provided by residues arginine 107–histidine 110, lysine 121, glycine 140–leucine 142, and arginine 147. Residues serine 182–valine 202 form a helical membrane-spanning segment. Residues lysine 203–arginine 543 lie on the Cytoplasmic side of the membrane. Residues leucine 212–aspartate 323 form the PAS domain. In terms of domain architecture, Histidine kinase spans glutamate 346–glycine 538. Histidine 349 carries the phosphohistidine; by autocatalysis modification.

As to quaternary structure, homodimer. Autophosphorylated. The phosphoryl group is rapidly transferred to DcuR.

The protein localises to the cell inner membrane. The catalysed reaction is ATP + protein L-histidine = ADP + protein N-phospho-L-histidine.. Member of the two-component regulatory system DcuR/DcuS. Involved in the C4-dicarboxylate-stimulated regulation of the genes encoding the anaerobic fumarate respiratory system (frdABCD; nuoAN; dcuB; sdhCDAB; etc.). Weakly regulates the aerobic C4-dicarboxylate transporter dctA. Activates DcuR by phosphorylation. The sequence is that of Sensor histidine kinase DcuS (dcuS) from Escherichia coli O157:H7.